Consider the following 207-residue polypeptide: Putative 3-methyladenine DNA glycosylase (207 aa).

It belongs to the DNA glycosylase MPG family.

This chain is Putative 3-methyladenine DNA glycosylase, found in Burkholderia orbicola (strain MC0-3).